We begin with the raw amino-acid sequence, 351 residues long: Protein-glutamate methylesterase/protein-glutamine glutaminase (351 aa).

A Response regulatory domain is found at 3–120; the sequence is KTLVVDDSAL…EISKIENELV (118 aa). Asp54 bears the 4-aspartylphosphate mark. The CheB-type methylesterase domain occupies 160–347; it reads ILIGSSTGGP…EQIVRMIEVK (188 aa). Residues Ser165, His192, and Asp289 contribute to the active site.

This sequence belongs to the CheB family. Phosphorylated by CheA. Phosphorylation of the N-terminal regulatory domain activates the methylesterase activity.

The protein resides in the cytoplasm. The enzyme catalyses [protein]-L-glutamate 5-O-methyl ester + H2O = L-glutamyl-[protein] + methanol + H(+). It carries out the reaction L-glutaminyl-[protein] + H2O = L-glutamyl-[protein] + NH4(+). Its function is as follows. Involved in chemotaxis. Part of a chemotaxis signal transduction system that modulates chemotaxis in response to various stimuli. Catalyzes the demethylation of specific methylglutamate residues introduced into the chemoreceptors (methyl-accepting chemotaxis proteins or MCP) by CheR. Also mediates the irreversible deamidation of specific glutamine residues to glutamic acid. The polypeptide is Protein-glutamate methylesterase/protein-glutamine glutaminase (Methanococcoides burtonii (strain DSM 6242 / NBRC 107633 / OCM 468 / ACE-M)).